Consider the following 146-residue polypeptide: uncharacterized protein (146 aa).

A Toprim domain is found at 31–119; sequence EKVMIVEGKS…RAYKEVAAAP (89 aa).

This is an uncharacterized protein from Bacillus subtilis (strain 168).